Here is a 358-residue protein sequence, read N- to C-terminus: Nicotinate-nucleotide--dimethylbenzimidazole phosphoribosyltransferase (358 aa).

Residue Glu314 is the Proton acceptor of the active site.

It belongs to the CobT family.

It catalyses the reaction 5,6-dimethylbenzimidazole + nicotinate beta-D-ribonucleotide = alpha-ribazole 5'-phosphate + nicotinate + H(+). It participates in nucleoside biosynthesis; alpha-ribazole biosynthesis; alpha-ribazole from 5,6-dimethylbenzimidazole: step 1/2. Functionally, catalyzes the synthesis of alpha-ribazole-5'-phosphate from nicotinate mononucleotide (NAMN) and 5,6-dimethylbenzimidazole (DMB). In Mycobacterium marinum (strain ATCC BAA-535 / M), this protein is Nicotinate-nucleotide--dimethylbenzimidazole phosphoribosyltransferase.